The following is a 319-amino-acid chain: Ribonucleoside-diphosphate reductase small chain (319 aa).

Residues aspartate 70, glutamate 101, and histidine 104 each coordinate Fe cation. Tyrosine 108 is a catalytic residue. The Fe cation site is built by glutamate 163, glutamate 197, and histidine 200. An interaction with R1 region spans residues 313 to 319; the sequence is FSLDVDF.

Belongs to the ribonucleoside diphosphate reductase small chain family. In terms of assembly, interacts with RNR1/OPG080 subunit. Can interact with host RNR1 supunit. Fe cation is required as a cofactor.

The catalysed reaction is a 2'-deoxyribonucleoside 5'-diphosphate + [thioredoxin]-disulfide + H2O = a ribonucleoside 5'-diphosphate + [thioredoxin]-dithiol. Its function is as follows. Ribonucleoside-diphosphate reductase holoenzyme provides the precursors necessary for viral DNA synthesis. Allows virus growth in non-dividing cells. Catalyzes the biosynthesis of deoxyribonucleotides from the corresponding ribonucleotides. The polypeptide is Ribonucleoside-diphosphate reductase small chain (OPG048) (Vaccinia virus (strain Ankara) (VACV)).